The primary structure comprises 390 residues: GTPase Obg (390 aa).

Residues 1–159 (MKFVDEATIL…RELMLELLLL (159 aa)) enclose the Obg domain. In terms of domain architecture, OBG-type G spans 160–333 (ADVGMLGLPN…LCWDVMNFLN (174 aa)). Residues 166–173 (GLPNAGKS), 191–195 (FTTLI), 213–216 (DIPG), 283–286 (NKID), and 314–316 (SAA) contribute to the GTP site. 2 residues coordinate Mg(2+): S173 and T193. A compositionally biased stretch (acidic residues) spans 363–384 (EVEAEAESEDDDDWDEEDDDGV). The disordered stretch occupies residues 363 to 390 (EVEAEAESEDDDDWDEEDDDGVEFIYER).

This sequence belongs to the TRAFAC class OBG-HflX-like GTPase superfamily. OBG GTPase family. Monomer. It depends on Mg(2+) as a cofactor.

The protein localises to the cytoplasm. An essential GTPase which binds GTP, GDP and possibly (p)ppGpp with moderate affinity, with high nucleotide exchange rates and a fairly low GTP hydrolysis rate. Plays a role in control of the cell cycle, stress response, ribosome biogenesis and in those bacteria that undergo differentiation, in morphogenesis control. The protein is GTPase Obg of Yersinia enterocolitica serotype O:8 / biotype 1B (strain NCTC 13174 / 8081).